The sequence spans 557 residues: Formate--tetrahydrofolate ligase (557 aa).

ATP is bound at residue 67-74; it reads TPAGEGKS.

It belongs to the formate--tetrahydrofolate ligase family.

The catalysed reaction is (6S)-5,6,7,8-tetrahydrofolate + formate + ATP = (6R)-10-formyltetrahydrofolate + ADP + phosphate. It functions in the pathway one-carbon metabolism; tetrahydrofolate interconversion. This is Formate--tetrahydrofolate ligase from Lacticaseibacillus paracasei (strain ATCC 334 / BCRC 17002 / CCUG 31169 / CIP 107868 / KCTC 3260 / NRRL B-441) (Lactobacillus paracasei).